A 214-amino-acid chain; its full sequence is Thioredoxin-like 4, chloroplastic (214 aa).

Low complexity predominate over residues 1–20 (MITASLLPLPATSSSSGRRS). The disordered stretch occupies residues 1–68 (MITASLLPLP…STNGSLPGLP (68 aa)). The transit peptide at 1–71 (MITASLLPLP…GSLPGLPPVV (71 aa)) directs the protein to the chloroplast. Over residues 21–34 (LPPPTTTFPRPPPP) the composition is skewed to pro residues. Low complexity predominate over residues 42–53 (SSSSSSASSTES). The region spanning 72–199 (VEEEEEEFCP…IIAAIQKYTA (128 aa)) is the Thioredoxin domain. Residues cysteine 117 and cysteine 120 each act as nucleophile in the active site. Cysteine 117 and cysteine 120 are joined by a disulfide.

Belongs to the thioredoxin family.

Its subcellular location is the plastid. It localises to the chloroplast. Probable thiol-disulfide oxidoreductase that may participate in various redox reactions. The polypeptide is Thioredoxin-like 4, chloroplastic (Oryza sativa subsp. japonica (Rice)).